A 463-amino-acid polypeptide reads, in one-letter code: Endoglucanase EG-1 (463 aa).

Residues 1 to 22 (MAPSATLPLTTAILAIGRLVAA) form the signal peptide. The tract at residues 23–397 (QQPGTSTPEV…DIGSTTNSTG (375 aa)) is catalytic. N-linked (GlcNAc...) asparagine glycans are attached at residues Asn78, Asn164, Asn204, and Asn208. Glu218 acts as the Nucleophile in catalysis. Glu223 serves as the catalytic Proton donor. The disordered stretch occupies residues 390–429 (GSTTNSTGGNPPPPPPPASSTTFSTTRRSSTTSSSPSCTQ). A glycan (N-linked (GlcNAc...) asparagine) is linked at Asn394. Residues 402-427 (PPPPPASSTTFSTTRRSSTTSSSPSC) are linker. The segment covering 408 to 429 (SSTTFSTTRRSSTTSSSPSCTQ) has biased composition (low complexity). In terms of domain architecture, CBM1 spans 427 to 463 (CTQTHWGQCGGIGYTGCKTCTSGTTCQYGNDYYSQCL). 2 disulfide bridges follow: Cys435–Cys452 and Cys446–Cys462.

This sequence belongs to the glycosyl hydrolase 7 (cellulase C) family.

It localises to the secreted. The catalysed reaction is Endohydrolysis of (1-&gt;4)-beta-D-glucosidic linkages in cellulose, lichenin and cereal beta-D-glucans.. Its function is as follows. The biological conversion of cellulose to glucose generally requires three types of hydrolytic enzymes: (1) Endoglucanases which cut internal beta-1,4-glucosidic bonds; (2) Exocellobiohydrolases that cut the disaccharide cellobiose from the non-reducing end of the cellulose polymer chain; (3) Beta-1,4-glucosidases which hydrolyze the cellobiose and other short cello-oligosaccharides to glucose. The sequence is that of Endoglucanase EG-1 (egl1) from Trichoderma longibrachiatum.